A 461-amino-acid polypeptide reads, in one-letter code: Argininosuccinate lyase (461 aa).

The protein belongs to the lyase 1 family. Argininosuccinate lyase subfamily.

The protein localises to the cytoplasm. It carries out the reaction 2-(N(omega)-L-arginino)succinate = fumarate + L-arginine. The protein operates within amino-acid biosynthesis; L-arginine biosynthesis; L-arginine from L-ornithine and carbamoyl phosphate: step 3/3. The polypeptide is Argininosuccinate lyase (Aeromonas salmonicida (strain A449)).